The chain runs to 910 residues: Eukaryotic translation initiation factor 3 subunit C (910 aa).

The disordered stretch occupies residues 1 to 21 (MSRFFANGSDSESESSEDEIQ). Acidic residues predominate over residues 11–20 (SESESSEDEI). 4 positions are modified to phosphoserine: serine 34, serine 165, serine 176, and serine 185. The segment at 157-281 (FREAPDQESE…KRAEDDEDGE (125 aa)) is disordered. Residues 162–186 (DQESEAEDEVVAQESDGGDAGDDSD) show a composition bias toward acidic residues. The span at 193 to 207 (EAAPKAVKSAPAKAA) shows a compositional bias: low complexity. Over residues 209-235 (ADDDDSDDSIDWDSDSESETESSDDEN) the composition is skewed to acidic residues. Positions 240-268 (MRERFLKRTTEKEEKDDDKRKDKRKEQKV) are enriched in basic and acidic residues. The PCI domain maps to 639-815 (FHMHINLELL…ETVVMHRSEP (177 aa)). Residues 847-910 (FFQRGNMGNR…QQQVQTIDEE (64 aa)) form a disordered region. Low complexity predominate over residues 862–874 (NRNQNNQGGNWLG). Basic residues predominate over residues 882–891 (RNRNQRGHHK). Residues 895-910 (DRQQQQQQQVQTIDEE) are compositionally biased toward low complexity.

Belongs to the eIF-3 subunit C family. Component of the eukaryotic translation initiation factor 3 (eIF-3) complex. The eIF-3 complex interacts with pix.

It localises to the cytoplasm. Component of the eukaryotic translation initiation factor 3 (eIF-3) complex, which is involved in protein synthesis of a specialized repertoire of mRNAs and, together with other initiation factors, stimulates binding of mRNA and methionyl-tRNAi to the 40S ribosome. The eIF-3 complex specifically targets and initiates translation of a subset of mRNAs involved in cell proliferation. This Drosophila yakuba (Fruit fly) protein is Eukaryotic translation initiation factor 3 subunit C.